The sequence spans 368 residues: uncharacterized protein (368 aa).

The interval 237 to 287 (ESLSIPSRRRPSSIAPIGTRPSRKEIAFSNSSTPTDQTLRPPNPPAANGNA) is disordered. Low complexity predominate over residues 238–253 (SLSIPSRRRPSSIAPI). Positions 264–276 (FSNSSTPTDQTLR) are enriched in polar residues.

This is an uncharacterized protein from Schizosaccharomyces pombe (strain 972 / ATCC 24843) (Fission yeast).